The sequence spans 382 residues: tRNA(Met) cytidine acetate ligase (382 aa).

ATP contacts are provided by residues 9-22, G103, N152, and R177; that span reads VTEY…HAYQ.

Belongs to the TmcAL family.

The protein localises to the cytoplasm. It catalyses the reaction cytidine(34) in elongator tRNA(Met) + acetate + ATP = N(4)-acetylcytidine(34) in elongator tRNA(Met) + AMP + diphosphate. In terms of biological role, catalyzes the formation of N(4)-acetylcytidine (ac(4)C) at the wobble position of elongator tRNA(Met), using acetate and ATP as substrates. First activates an acetate ion to form acetyladenylate (Ac-AMP) and then transfers the acetyl group to tRNA to form ac(4)C34. This Levilactobacillus brevis (strain ATCC 367 / BCRC 12310 / CIP 105137 / JCM 1170 / LMG 11437 / NCIMB 947 / NCTC 947) (Lactobacillus brevis) protein is tRNA(Met) cytidine acetate ligase.